The chain runs to 193 residues: Recombination protein RecR (193 aa).

The segment at 61-76 adopts a C4-type zinc-finger fold; that stretch reads CASCNALSESEICEIC. One can recognise a Toprim domain in the interval 84 to 170; the sequence is SQLCMVLHPR…TFTKIAQGVP (87 aa).

It belongs to the RecR family.

May play a role in DNA repair. It seems to be involved in an RecBC-independent recombinational process of DNA repair. It may act with RecF and RecO. This Helicobacter pylori (strain Shi470) protein is Recombination protein RecR.